A 906-amino-acid chain; its full sequence is Eukaryotic translation initiation factor 4 gamma 2 (906 aa).

N-acetylmethionine is present on methionine 1. The segment at 1 to 71 (MESAIAEGGA…SAANNSANEK (71 aa)) is disordered. The residue at position 11 (serine 11) is a Phosphoserine. One can recognise an MIF4G domain in the interval 78–308 (FRKVRGILNK…QDTVELREHH (231 aa)). Residue threonine 89 is modified to Phosphothreonine. Residue arginine 359 is modified to Omega-N-methylarginine. Serine 394 is subject to Phosphoserine. Lysine 430 is subject to N6-methyllysine. Serine 442 is subject to Phosphoserine. Residues 497–540 (PPSAQPPRTQTPPLGQTPQLGLKTNPPLIQEKPAKTSKKPPPSK) form a disordered region. Residues 502–515 (PPRTQTPPLGQTPQ) show a composition bias toward polar residues. Omega-N-methylarginine is present on arginine 504. A phosphothreonine mark is found at threonine 507 and threonine 513. An MI domain is found at 542–665 (ELLKLTEAVV…SISELAQPLE (124 aa)). Lysine 574 participates in a covalent cross-link: Glycyl lysine isopeptide (Lys-Gly) (interchain with G-Cter in SUMO2). Positions 719–903 (EGKGLSFLFP…ETAEEEESEE (185 aa)) constitute a W2 domain. Serine 901 is subject to Phosphoserine.

The protein belongs to the eukaryotic initiation factor 4G family. In terms of assembly, interacts with the serine/threonine protein kinases MKNK1 and MKNK2. Binds EIF4A and EIF3. Interacts with MIF4GD. Interacts with DAZAP2. In terms of processing, phosphorylation; hyperphosphorylated during mitosis. As to expression, ubiquitously expressed in all tissues examined.

Appears to play a role in the switch from cap-dependent to IRES-mediated translation during mitosis, apoptosis and viral infection. Cleaved by some caspases and viral proteases. This Mus musculus (Mouse) protein is Eukaryotic translation initiation factor 4 gamma 2.